Reading from the N-terminus, the 613-residue chain is Dihydroxy-acid dehydratase (613 aa).

Residue aspartate 81 participates in Mg(2+) binding. Residue cysteine 122 coordinates [2Fe-2S] cluster. Mg(2+)-binding residues include aspartate 123 and lysine 124. An N6-carboxylysine modification is found at lysine 124. Cysteine 195 is a [2Fe-2S] cluster binding site. Residue glutamate 491 participates in Mg(2+) binding. Residue serine 517 is the Proton acceptor of the active site.

Belongs to the IlvD/Edd family. As to quaternary structure, homodimer. The cofactor is [2Fe-2S] cluster. It depends on Mg(2+) as a cofactor.

It carries out the reaction (2R)-2,3-dihydroxy-3-methylbutanoate = 3-methyl-2-oxobutanoate + H2O. The enzyme catalyses (2R,3R)-2,3-dihydroxy-3-methylpentanoate = (S)-3-methyl-2-oxopentanoate + H2O. The protein operates within amino-acid biosynthesis; L-isoleucine biosynthesis; L-isoleucine from 2-oxobutanoate: step 3/4. Its pathway is amino-acid biosynthesis; L-valine biosynthesis; L-valine from pyruvate: step 3/4. In terms of biological role, functions in the biosynthesis of branched-chain amino acids. Catalyzes the dehydration of (2R,3R)-2,3-dihydroxy-3-methylpentanoate (2,3-dihydroxy-3-methylvalerate) into 2-oxo-3-methylpentanoate (2-oxo-3-methylvalerate) and of (2R)-2,3-dihydroxy-3-methylbutanoate (2,3-dihydroxyisovalerate) into 2-oxo-3-methylbutanoate (2-oxoisovalerate), the penultimate precursor to L-isoleucine and L-valine, respectively. The protein is Dihydroxy-acid dehydratase of Buchnera aphidicola subsp. Melaphis rhois.